Here is a 181-residue protein sequence, read N- to C-terminus: Protein GrpE (181 aa).

Residues 1 to 13 (MENTQENPATQSA) show a composition bias toward polar residues. Residues 1-34 (MENTQENPATQSAEDIGSAKQAAQGAAPAAEAAD) are disordered. Residues 19–34 (AKQAAQGAAPAAEAAD) are compositionally biased toward low complexity.

Belongs to the GrpE family. Homodimer.

It is found in the cytoplasm. Functionally, participates actively in the response to hyperosmotic and heat shock by preventing the aggregation of stress-denatured proteins, in association with DnaK and GrpE. It is the nucleotide exchange factor for DnaK and may function as a thermosensor. Unfolded proteins bind initially to DnaJ; upon interaction with the DnaJ-bound protein, DnaK hydrolyzes its bound ATP, resulting in the formation of a stable complex. GrpE releases ADP from DnaK; ATP binding to DnaK triggers the release of the substrate protein, thus completing the reaction cycle. Several rounds of ATP-dependent interactions between DnaJ, DnaK and GrpE are required for fully efficient folding. In Burkholderia vietnamiensis (strain G4 / LMG 22486) (Burkholderia cepacia (strain R1808)), this protein is Protein GrpE.